The primary structure comprises 98 residues: Co-chaperonin GroES (98 aa).

Belongs to the GroES chaperonin family. Heptamer of 7 subunits arranged in a ring. Interacts with the chaperonin GroEL.

Its subcellular location is the cytoplasm. Together with the chaperonin GroEL, plays an essential role in assisting protein folding. The GroEL-GroES system forms a nano-cage that allows encapsulation of the non-native substrate proteins and provides a physical environment optimized to promote and accelerate protein folding. GroES binds to the apical surface of the GroEL ring, thereby capping the opening of the GroEL channel. This chain is Co-chaperonin GroES, found in Beutenbergia cavernae (strain ATCC BAA-8 / DSM 12333 / CCUG 43141 / JCM 11478 / NBRC 16432 / NCIMB 13614 / HKI 0122).